Here is a 137-residue protein sequence, read N- to C-terminus: Peptide methionine sulfoxide reductase MsrB (137 aa).

The region spanning 7-129 is the MsrB domain; sequence AEELKKKLSE…NSASLAFSDE (123 aa). Zn(2+)-binding residues include C46, C49, C95, and C98. The active-site Nucleophile is C118.

The protein belongs to the MsrB Met sulfoxide reductase family. It depends on Zn(2+) as a cofactor.

The catalysed reaction is L-methionyl-[protein] + [thioredoxin]-disulfide + H2O = L-methionyl-(R)-S-oxide-[protein] + [thioredoxin]-dithiol. The chain is Peptide methionine sulfoxide reductase MsrB from Salmonella arizonae (strain ATCC BAA-731 / CDC346-86 / RSK2980).